A 349-amino-acid chain; its full sequence is Protein FAM98C (349 aa).

Residues P313–K349 form a disordered region.

It belongs to the FAM98 family.

The protein is Protein FAM98C (FAM98C) of Homo sapiens (Human).